The sequence spans 93 residues: MPAQAVVTLRYGPYSAVGLSVEHRTYRLQGLQAVLAKDGHQIILEQIEDWNLVELVVNEETVFQCDIQELEFGGDGKLDPLCEEARIAVLNAF.

This sequence belongs to the UPF0728 family.

This chain is UPF0728 protein C10orf53 homolog, found in Mus musculus (Mouse).